The following is a 71-amino-acid chain: MKQGIHPKYEQVTASCSCGNVIKINSTVGHDLNLDVCGECHPFYTGKQRDVASGGRVDRFNKRFSVPGAKK.

The Zn(2+) site is built by Cys16, Cys18, Cys37, and Cys40.

This sequence belongs to the bacterial ribosomal protein bL31 family. Type A subfamily. In terms of assembly, part of the 50S ribosomal subunit. Zn(2+) is required as a cofactor.

In terms of biological role, binds the 23S rRNA. This Yersinia pseudotuberculosis serotype O:1b (strain IP 31758) protein is Large ribosomal subunit protein bL31.